We begin with the raw amino-acid sequence, 544 residues long: Phenylalanine--tRNA ligase beta subunit (544 aa).

In terms of domain architecture, B5 spans 270–346 (LEPKTRFLTK…KGYGYENIKV (77 aa)). The Mg(2+) site is built by Asp-324, Asp-330, Glu-333, and Asp-334.

Belongs to the phenylalanyl-tRNA synthetase beta subunit family. Type 2 subfamily. Tetramer of two alpha and two beta subunits. Mg(2+) is required as a cofactor.

The protein resides in the cytoplasm. It carries out the reaction tRNA(Phe) + L-phenylalanine + ATP = L-phenylalanyl-tRNA(Phe) + AMP + diphosphate + H(+). This chain is Phenylalanine--tRNA ligase beta subunit, found in Methanosarcina barkeri (strain Fusaro / DSM 804).